The following is a 267-amino-acid chain: 2-oxo-hept-4-ene-1,7-dioate hydratase (267 aa).

Positions 106, 108, and 139 each coordinate Mg(2+).

The protein belongs to the hydratase/decarboxylase family. Homodecamer. It depends on Mg(2+) as a cofactor.

The catalysed reaction is (4Z)-2-oxohept-4-enedioate + H2O = (4S)-4-hydroxy-2-oxoheptanedioate. It functions in the pathway aromatic compound metabolism; 4-hydroxyphenylacetate degradation; pyruvate and succinate semialdehyde from 4-hydroxyphenylacetate: step 6/7. Transforms 2-oxo-hept-4-ene-1,7-dioate (OHED) into 4-hydroxy-2-oxoheptanedioate, a step in the 4-hydroxyphenylacetic acid (4-HPA) degradation pathway. The sequence is that of 2-oxo-hept-4-ene-1,7-dioate hydratase from Escherichia coli.